Reading from the N-terminus, the 554-residue chain is Dihydroxy-acid dehydratase (554 aa).

Asp78 provides a ligand contact to Mg(2+). Cys119 contributes to the [2Fe-2S] cluster binding site. 2 residues coordinate Mg(2+): Asp120 and Lys121. Lys121 carries the N6-carboxylysine modification. A [2Fe-2S] cluster-binding site is contributed by Cys191. Residue Glu444 participates in Mg(2+) binding. Ser470 acts as the Proton acceptor in catalysis.

This sequence belongs to the IlvD/Edd family. Homodimer. [2Fe-2S] cluster serves as cofactor. Mg(2+) is required as a cofactor.

It carries out the reaction (2R)-2,3-dihydroxy-3-methylbutanoate = 3-methyl-2-oxobutanoate + H2O. It catalyses the reaction (2R,3R)-2,3-dihydroxy-3-methylpentanoate = (S)-3-methyl-2-oxopentanoate + H2O. It participates in amino-acid biosynthesis; L-isoleucine biosynthesis; L-isoleucine from 2-oxobutanoate: step 3/4. The protein operates within amino-acid biosynthesis; L-valine biosynthesis; L-valine from pyruvate: step 3/4. In terms of biological role, functions in the biosynthesis of branched-chain amino acids. Catalyzes the dehydration of (2R,3R)-2,3-dihydroxy-3-methylpentanoate (2,3-dihydroxy-3-methylvalerate) into 2-oxo-3-methylpentanoate (2-oxo-3-methylvalerate) and of (2R)-2,3-dihydroxy-3-methylbutanoate (2,3-dihydroxyisovalerate) into 2-oxo-3-methylbutanoate (2-oxoisovalerate), the penultimate precursor to L-isoleucine and L-valine, respectively. In Nitratidesulfovibrio vulgaris (strain ATCC 29579 / DSM 644 / CCUG 34227 / NCIMB 8303 / VKM B-1760 / Hildenborough) (Desulfovibrio vulgaris), this protein is Dihydroxy-acid dehydratase.